The primary structure comprises 534 residues: Serine/threonine-protein phosphatase 2B catalytic subunit (534 aa).

The Fe cation site is built by aspartate 88, histidine 90, and aspartate 116. Residues aspartate 116 and asparagine 148 each coordinate Zn(2+). Histidine 149 (proton donor) is an active-site residue. Zn(2+) is bound by residues histidine 197 and histidine 279. Disordered stretches follow at residues 375-398 (LEDE…DVES) and 475-534 (PSHE…TREA). 2 stretches are compositionally biased toward basic and acidic residues: residues 475-497 (PSHE…RAQQ) and 524-534 (QRDAARETREA).

The protein belongs to the PPP phosphatase family. PP-2B subfamily. Composed of two components (A and B), the A component is the catalytic subunit and the B component confers calcium sensitivity. The cofactor is Fe(3+). Zn(2+) serves as cofactor.

It carries out the reaction O-phospho-L-seryl-[protein] + H2O = L-seryl-[protein] + phosphate. The enzyme catalyses O-phospho-L-threonyl-[protein] + H2O = L-threonyl-[protein] + phosphate. In terms of biological role, calcium-dependent, calmodulin-stimulated protein phosphatase. This subunit may have a role in the calmodulin activation of calcineurin. The polypeptide is Serine/threonine-protein phosphatase 2B catalytic subunit (cnaA) (Aspergillus fumigatus (strain ATCC MYA-4609 / CBS 101355 / FGSC A1100 / Af293) (Neosartorya fumigata)).